We begin with the raw amino-acid sequence, 195 residues long: ATP-dependent Clp protease proteolytic subunit (195 aa).

Serine 99 (nucleophile) is an active-site residue. The active site involves histidine 124.

The protein belongs to the peptidase S14 family. Fourteen ClpP subunits assemble into 2 heptameric rings which stack back to back to give a disk-like structure with a central cavity, resembling the structure of eukaryotic proteasomes.

It localises to the cytoplasm. The catalysed reaction is Hydrolysis of proteins to small peptides in the presence of ATP and magnesium. alpha-casein is the usual test substrate. In the absence of ATP, only oligopeptides shorter than five residues are hydrolyzed (such as succinyl-Leu-Tyr-|-NHMec, and Leu-Tyr-Leu-|-Tyr-Trp, in which cleavage of the -Tyr-|-Leu- and -Tyr-|-Trp bonds also occurs).. Functionally, cleaves peptides in various proteins in a process that requires ATP hydrolysis. Has a chymotrypsin-like activity. Plays a major role in the degradation of misfolded proteins. This Caldicellulosiruptor saccharolyticus (strain ATCC 43494 / DSM 8903 / Tp8T 6331) protein is ATP-dependent Clp protease proteolytic subunit.